The sequence spans 150 residues: MVHATSPLLLLLLLSLALVAPGLSARKCSLTGEWDNNLGSNMTIGAVNDNGEFNGTYITAVADNPGNIKLSPLLGIQHKRACQPTFGFTVHWNFSESTSVFVGQCFIDRSGKEVLKTKWLQRLAVDDISDDWKATRVGYNNFTRQRTVEE.

A signal peptide spans 1 to 24 (MVHATSPLLLLLLLSLALVAPGLS). The region spanning 26–147 (RKCSLTGEWD…GYNNFTRQRT (122 aa)) is the Avidin-like domain. Cysteines 28 and 105 form a disulfide. Residues Asn36 and Ser40 each contribute to the biotin site. N-linked (GlcNAc...) asparagine glycosylation is found at Asn41 and Asn54. Biotin-binding residues include Tyr57, Thr59, and Asp63. N-linked (GlcNAc...) asparagine glycosylation is present at Asn93. Residues Ser95, Ser99, and Asn140 each coordinate biotin. N-linked (GlcNAc...) asparagine glycosylation occurs at Asn141.

This sequence belongs to the avidin/streptavidin family. In terms of assembly, homotetramer. In terms of processing, glycosylated.

It is found in the secreted. Forms a strong non-covalent specific complex with biotin. This Gallus gallus (Chicken) protein is Avidin-related protein 7 (AVR7).